Reading from the N-terminus, the 155-residue chain is Large ribosomal subunit protein eL24 (155 aa).

Positions 92-155 (AKRNMKPEVR…KAAPRVGGKR (64 aa)) are disordered. Residues 96-117 (MKPEVRKAQREQAIKQAKEQKK) are compositionally biased toward basic and acidic residues. Residues 124 to 133 (KTTAPPTKGK) show a composition bias toward low complexity.

Belongs to the eukaryotic ribosomal protein eL24 family.

The sequence is that of Large ribosomal subunit protein eL24 (RpL24) from Plutella xylostella (Diamondback moth).